We begin with the raw amino-acid sequence, 118 residues long: Ribonuclease P protein component (118 aa).

It belongs to the RnpA family. In terms of assembly, consists of a catalytic RNA component (M1 or rnpB) and a protein subunit.

It catalyses the reaction Endonucleolytic cleavage of RNA, removing 5'-extranucleotides from tRNA precursor.. In terms of biological role, RNaseP catalyzes the removal of the 5'-leader sequence from pre-tRNA to produce the mature 5'-terminus. It can also cleave other RNA substrates such as 4.5S RNA. The protein component plays an auxiliary but essential role in vivo by binding to the 5'-leader sequence and broadening the substrate specificity of the ribozyme. The protein is Ribonuclease P protein component of Shewanella putrefaciens (strain CN-32 / ATCC BAA-453).